The chain runs to 286 residues: Forkhead box protein E3 (286 aa).

The tract at residues 1 to 62 is disordered; sequence MDAHVAFSGF…GRRRRRPLQR (62 aa). The segment at residues 64-158 is a DNA-binding region (fork-head); it reads KPPYSYIALI…DNGSFLRRRK (95 aa).

Its subcellular location is the nucleus. In terms of biological role, transcription factor that controls lens epithelial cell growth through regulation of proliferation, apoptosis and cell cycle. During lens development, controls the ratio of the lens fiber cells to the cells of the anterior lens epithelium by regulating the rate of proliferation and differentiation. Controls lens vesicle closure and subsequent separation of the lens vesicle from ectoderm. Controls the expression of DNAJB1 in a pathway that is crucial for the development of the anterior segment of the eye. In Rattus norvegicus (Rat), this protein is Forkhead box protein E3 (Foxe3).